The chain runs to 364 residues: Adenine deaminase (364 aa).

3 residues coordinate Zn(2+): histidine 25, histidine 27, and histidine 221. Residue glutamate 224 is the Proton donor of the active site. Aspartate 301 contacts Zn(2+). Aspartate 302 lines the substrate pocket.

It belongs to the metallo-dependent hydrolases superfamily. Adenosine and AMP deaminases family. Adenine deaminase type 2 subfamily. Zn(2+) serves as cofactor.

It localises to the cytoplasm. Its subcellular location is the nucleus. It carries out the reaction adenine + H2O + H(+) = hypoxanthine + NH4(+). Catalyzes the hydrolytic deamination of adenine to hypoxanthine. Plays an important role in the purine salvage pathway and in nitrogen catabolism. Has no activity with adenosine as a substrate. This is Adenine deaminase (aah1) from Emericella nidulans (strain FGSC A4 / ATCC 38163 / CBS 112.46 / NRRL 194 / M139) (Aspergillus nidulans).